Reading from the N-terminus, the 196-residue chain is Peptide methionine sulfoxide reductase (196 aa).

Over residues 1-14 the composition is skewed to polar residues; sequence MEGNNSSSKSTTNP. A disordered region spans residues 1–23; it reads MEGNNSSSKSTTNPALDPDLDSP.

Belongs to the MsrA Met sulfoxide reductase family.

The enzyme catalyses L-methionyl-[protein] + [thioredoxin]-disulfide + H2O = L-methionyl-(S)-S-oxide-[protein] + [thioredoxin]-dithiol. It catalyses the reaction [thioredoxin]-disulfide + L-methionine + H2O = L-methionine (S)-S-oxide + [thioredoxin]-dithiol. Its function is as follows. Has an important function as a repair enzyme for proteins that have been inactivated by oxidation. Catalyzes the reversible oxidation-reduction of methionine sulfoxide in proteins to methionine. The polypeptide is Peptide methionine sulfoxide reductase (E4) (Solanum lycopersicum (Tomato)).